The sequence spans 902 residues: Respiratory nitrate reductase alpha chain (902 aa).

[4Fe-4S] cluster contacts are provided by His29, Cys33, and Cys37.

Belongs to the prokaryotic molybdopterin-containing oxidoreductase family. Heterotrimer composed of an alpha, a beta and a gamma chain. Alpha and beta are catalytic chains; gamma chains are involved in binding the enzyme complex to the cytoplasmic membrane. [4Fe-4S] cluster serves as cofactor. It depends on Mo-bis(molybdopterin guanine dinucleotide) as a cofactor.

The protein resides in the cell membrane. Its subcellular location is the cytoplasm. The catalysed reaction is nitrate + a quinol = a quinone + nitrite + H2O. With respect to regulation, inhibited by micromolar concentrations of azide. The nitrate reductase enzyme complex allows Bradyrhizobium sp. USDA 3045 to use nitrate as an electron acceptor during anaerobic growth. The alpha chain is the actual site of nitrate reduction. This is Respiratory nitrate reductase alpha chain (narG) from Bradyrhizobium sp.